A 77-amino-acid polypeptide reads, in one-letter code: Translation initiation factor IF-1, chloroplastic (77 aa).

The region spanning 1-71 (MKEQKWTHEG…TRGRIIYRLR (71 aa)) is the S1-like domain.

Belongs to the IF-1 family. Component of the 30S ribosomal translation pre-initiation complex which assembles on the 30S ribosome in the order IF-2 and IF-3, IF-1 and N-formylmethionyl-tRNA(fMet); mRNA recruitment can occur at any time during PIC assembly.

The protein localises to the plastid. It localises to the chloroplast. Functionally, one of the essential components for the initiation of protein synthesis. Stabilizes the binding of IF-2 and IF-3 on the 30S subunit to which N-formylmethionyl-tRNA(fMet) subsequently binds. Helps modulate mRNA selection, yielding the 30S pre-initiation complex (PIC). Upon addition of the 50S ribosomal subunit IF-1, IF-2 and IF-3 are released leaving the mature 70S translation initiation complex. In Coffea arabica (Arabian coffee), this protein is Translation initiation factor IF-1, chloroplastic.